We begin with the raw amino-acid sequence, 710 residues long: Polyribonucleotide nucleotidyltransferase (710 aa).

The Mg(2+) site is built by Asp-488 and Asp-494. The 61-residue stretch at 555 to 615 (PVIKVISIDP…EKVDAAIEQI (61 aa)) folds into the KH domain. The region spanning 625–688 (GDVFSGKVTR…NLGRLQLEEF (64 aa)) is the S1 motif domain. The disordered stretch occupies residues 688 to 710 (FSDSPDHKHGEKRSFKRHRKNDN). Over residues 691–700 (SPDHKHGEKR) the composition is skewed to basic and acidic residues. Residues 701–710 (SFKRHRKNDN) are compositionally biased toward basic residues.

It belongs to the polyribonucleotide nucleotidyltransferase family. It depends on Mg(2+) as a cofactor.

The protein resides in the cytoplasm. It carries out the reaction RNA(n+1) + phosphate = RNA(n) + a ribonucleoside 5'-diphosphate. Its function is as follows. Involved in mRNA degradation. Catalyzes the phosphorolysis of single-stranded polyribonucleotides processively in the 3'- to 5'-direction. The sequence is that of Polyribonucleotide nucleotidyltransferase from Pseudothermotoga lettingae (strain ATCC BAA-301 / DSM 14385 / NBRC 107922 / TMO) (Thermotoga lettingae).